We begin with the raw amino-acid sequence, 78 residues long: Sec-independent protein translocase protein TatA (78 aa).

A helical membrane pass occupies residues 1–21 (MGSLSIWHWLIVLLIVALVFG). Basic and acidic residues-rich tracts occupy residues 39-57 (FKEG…RDQL) and 65-78 (VDAK…GDSR). Residues 39 to 78 (FKEGMKDGETPEGQQRDQLSRTNTVDVDAKEKAPHSGDSR) are disordered.

Belongs to the TatA/E family. In terms of assembly, the Tat system comprises two distinct complexes: a TatABC complex, containing multiple copies of TatA, TatB and TatC subunits, and a separate TatA complex, containing only TatA subunits. Substrates initially bind to the TatABC complex, which probably triggers association of the separate TatA complex to form the active translocon.

It is found in the cell inner membrane. Its function is as follows. Part of the twin-arginine translocation (Tat) system that transports large folded proteins containing a characteristic twin-arginine motif in their signal peptide across membranes. TatA could form the protein-conducting channel of the Tat system. This chain is Sec-independent protein translocase protein TatA, found in Paraburkholderia phymatum (strain DSM 17167 / CIP 108236 / LMG 21445 / STM815) (Burkholderia phymatum).